The following is a 413-amino-acid chain: Ras association domain-containing protein 5 (413 aa).

Residues 1–103 (MASPAIGQRP…RPRDVRSIFE (103 aa)) form a disordered region. The span at 52 to 74 (SEDRGGRRSGRRDPEPTPRDCRH) shows a compositional bias: basic and acidic residues. A Phorbol-ester/DAG-type zinc finger spans residues 117 to 165 (GHRFVELALRGGPGWCDLCGREVLRQALRCANCKFTCHSECRSLIQLDC). 2 positions are modified to phosphoserine: Ser-177 and Ser-274. Positions 265 to 359 (PAATTDKRTS…LSFVLKENET (95 aa)) constitute a Ras-associating domain. Thr-347 is modified (phosphothreonine). Residues 361-408 (EVEWDAFSIPELQNFLTILEKEEQDKIHQLQKKYNKFRQKLEEALRES) enclose the SARAH domain.

In terms of assembly, interacts directly with activated HRAS; a RASSF5-STK4/MST1 complex probably associates with activated HRAS. Interacts with KRAS. Probably interacts with Ras-like GTPases RRAS, MRAS, RAP1B, RAP2A and RALA. Interacts with RRAS2. Can self-associate. Interacts with RSSF1 isoform A. The RSSF1 isoform A-RSSF5 heterodimer probably mediates the association of RSSF1 with HRAS. Isoform 2 interacts with activated RAP1A and ITGAL/LFA-1. Binds STK4/MST1, inhibiting STK4/MST1 autoactivation.

It localises to the cytoplasm. It is found in the cytoskeleton. Potential tumor suppressor. Seems to be involved in lymphocyte adhesion by linking RAP1A activation upon T-cell receptor or chemokine stimulation to integrin activation. Isoform 2 stimulates lymphocyte polarization and the patch-like distribution of ITGAL/LFA-1, resulting in an enhanced adhesion to ICAM1. Together with RAP1A may participate in regulation of microtubule growth. The association of isoform 2 with activated RAP1A is required for directional movement of endothelial cells during wound healing. May be involved in regulation of Ras apoptotic function. The RASSF5-STK4/MST1 complex may mediate HRAS and KRAS induced apoptosis. This Mus musculus (Mouse) protein is Ras association domain-containing protein 5 (Rassf5).